The primary structure comprises 349 residues: CCN family member 2 (349 aa).

The first 26 residues, 1–26, serve as a signal peptide directing secretion; it reads MTAASMGPVRVAFVVLLALCSRPAVG. Positions 27-98 constitute an IGFBP N-terminal domain; the sequence is QNCSGPCRCP…NRKIGVCTAK (72 aa). Asparagine 28 carries N-linked (GlcNAc...) asparagine glycosylation. 6 cysteine pairs are disulfide-bonded: cysteine 29–cysteine 54, cysteine 33–cysteine 56, cysteine 35–cysteine 57, cysteine 43–cysteine 60, cysteine 68–cysteine 82, and cysteine 74–cysteine 95. The 67-residue stretch at 101 to 167 folds into the VWFC domain; it reads APCIFGGTVY…GKCCEEWVCD (67 aa). A TSP type-1 domain is found at 198-243; it reads NCLVQTTEWSACSKTCGMGISTRVTNDNASCRLEKQSRLCMVRPCE. Residue asparagine 225 is glycosylated (N-linked (GlcNAc...) asparagine). Residues 247 to 349 form a heparin-binding region; sequence EENIKKGKKC…YYRKMYGDMA (103 aa). 5 cysteine pairs are disulfide-bonded: cysteine 256–cysteine 293, cysteine 273–cysteine 307, cysteine 284–cysteine 323, cysteine 287–cysteine 325, and cysteine 292–cysteine 329. Residues 256 to 330 form the CTCK domain; the sequence is CIRTPKISKP…KTCACHYNCP (75 aa).

Belongs to the CCN family. In terms of assembly, monomer. Interacts with TSKU. As to expression, expressed in bone marrow and thymic cells. Also expressed one of two Wilms tumors tested.

Its subcellular location is the secreted. The protein localises to the extracellular space. It localises to the extracellular matrix. Its function is as follows. Major connective tissue mitoattractant secreted by vascular endothelial cells. Promotes proliferation and differentiation of chondrocytes. Is involved in the stimulation of osteoblast differentiation and has a critical role in osteogenesis. Mediates heparin- and divalent cation-dependent cell adhesion in many cell types including fibroblasts, myofibroblasts, endothelial and epithelial cells. Enhances fibroblast growth factor-induced DNA synthesis. The chain is CCN family member 2 from Homo sapiens (Human).